The chain runs to 270 residues: Orotidine 5'-phosphate decarboxylase (270 aa).

Lysine 89 functions as the Proton donor in the catalytic mechanism.

This sequence belongs to the OMP decarboxylase family. Type 2 subfamily.

It catalyses the reaction orotidine 5'-phosphate + H(+) = UMP + CO2. It functions in the pathway pyrimidine metabolism; UMP biosynthesis via de novo pathway; UMP from orotate: step 2/2. The polypeptide is Orotidine 5'-phosphate decarboxylase (Dehalococcoides mccartyi (strain ATCC BAA-2100 / JCM 16839 / KCTC 5957 / BAV1)).